We begin with the raw amino-acid sequence, 89 residues long: MALTTEEKKQVLSEYGLHETDTGSPEAQVAMLTKRIVDLTEHLKMHKHDHHSRRGLLLLVGRRRRLLKYVQKVDIERYRSLIERLGLRR.

Residues 1–21 (MALTTEEKKQVLSEYGLHETD) are compositionally biased toward basic and acidic residues. Residues 1–24 (MALTTEEKKQVLSEYGLHETDTGS) are disordered.

Belongs to the universal ribosomal protein uS15 family. Part of the 30S ribosomal subunit. Forms a bridge to the 50S subunit in the 70S ribosome, contacting the 23S rRNA.

One of the primary rRNA binding proteins, it binds directly to 16S rRNA where it helps nucleate assembly of the platform of the 30S subunit by binding and bridging several RNA helices of the 16S rRNA. In terms of biological role, forms an intersubunit bridge (bridge B4) with the 23S rRNA of the 50S subunit in the ribosome. The sequence is that of Small ribosomal subunit protein uS15 from Rhodococcus jostii (strain RHA1).